An 878-amino-acid polypeptide reads, in one-letter code: Longitudinals lacking protein, isoforms N/O/W/X/Y (878 aa).

The region spanning 32-97 (VDCTLAAEGK…MYRGEVNISQ (66 aa)) is the BTB domain. Disordered regions lie at residues 115-200 (LSDN…SSVL), 228-340 (SSGP…ASAS), and 542-583 (QIVK…QTHA). 5 stretches are compositionally biased toward low complexity: residues 162–175 (SGDV…SSSP), 228–251 (SSGP…LTST), 263–293 (TSST…QTTS), 329–340 (NSATGPNPASAS), and 546–569 (QQHQ…QQQQ). The C2H2-type 1; degenerate zinc-finger motif lies at 709–731 (YACNVCGKTYKIKGSLKRHKNYE). Residues 794–816 (FQCDFCLKWFKRRSHLNRHKKLH) form a C2H2-type 2 zinc finger. Residues 826-863 (SKQKPKTTSGQNLSHDANTDDEVATTNPAATEDESNYP) are disordered. Residues 831-841 (KTTSGQNLSHD) show a composition bias toward polar residues.

In terms of tissue distribution, by stage 11, isoform W, isoform X and isoform Y are expressed throughout the mesoderm, whereas isoform O is expressed in both mesoderm and ectoderm. From stage 15, expression of isoform O expands to all tissues, whereas expression of isoform W, isoform X and isoform Y becomes restricted during later stages; starting from stage 14 to 16, isoform W, isoform X and isoform Y are expressed in muscle. From stages 14 and 15, isoform W and isoform Y are expressed in the gut. For some isoforms, expression is also seen in specific types of cells in the embryo; isoform O is expressed in the ventral furrow at stage 5 and in the dorsal epidermis from stage 7. Isoform Y shows prominent expression in the gonad starting at stage 15.

Its subcellular location is the nucleus. Its function is as follows. Putative transcription factor required for axon growth and guidance in the central and peripheral nervous systems. Repels CNS axons away from the midline by promoting the expression of the midline repellent sli and its receptor robo. The chain is Longitudinals lacking protein, isoforms N/O/W/X/Y from Drosophila melanogaster (Fruit fly).